A 359-amino-acid polypeptide reads, in one-letter code: 3-dehydroquinate synthase (359 aa).

Residues 71 to 76 (DGEAYK), 105 to 109 (GVVGD), 129 to 130 (TT), K142, and K151 contribute to the NAD(+) site. Residues E184, H247, and H264 each contribute to the Zn(2+) site.

Belongs to the sugar phosphate cyclases superfamily. Dehydroquinate synthase family. It depends on Co(2+) as a cofactor. Zn(2+) is required as a cofactor. Requires NAD(+) as cofactor.

The protein resides in the cytoplasm. It catalyses the reaction 7-phospho-2-dehydro-3-deoxy-D-arabino-heptonate = 3-dehydroquinate + phosphate. Its pathway is metabolic intermediate biosynthesis; chorismate biosynthesis; chorismate from D-erythrose 4-phosphate and phosphoenolpyruvate: step 2/7. In terms of biological role, catalyzes the conversion of 3-deoxy-D-arabino-heptulosonate 7-phosphate (DAHP) to dehydroquinate (DHQ). The polypeptide is 3-dehydroquinate synthase (Burkholderia lata (strain ATCC 17760 / DSM 23089 / LMG 22485 / NCIMB 9086 / R18194 / 383)).